Reading from the N-terminus, the 439-residue chain is Ribosomal protein uS12 methylthiotransferase RimO (439 aa).

In terms of domain architecture, MTTase N-terminal spans 7-119 (KQLCLISLGC…IDIMIAKKQN (113 aa)). Positions 16, 50, 82, 151, 155, and 158 each coordinate [4Fe-4S] cluster. Positions 137–365 (TGSSVHAYVK…NKIALKHQNN (229 aa)) constitute a Radical SAM core domain.

Belongs to the methylthiotransferase family. RimO subfamily. It depends on [4Fe-4S] cluster as a cofactor.

It localises to the cytoplasm. The enzyme catalyses L-aspartate(89)-[ribosomal protein uS12]-hydrogen + (sulfur carrier)-SH + AH2 + 2 S-adenosyl-L-methionine = 3-methylsulfanyl-L-aspartate(89)-[ribosomal protein uS12]-hydrogen + (sulfur carrier)-H + 5'-deoxyadenosine + L-methionine + A + S-adenosyl-L-homocysteine + 2 H(+). Functionally, catalyzes the methylthiolation of an aspartic acid residue of ribosomal protein uS12. The chain is Ribosomal protein uS12 methylthiotransferase RimO from Helicobacter pylori (strain Shi470).